The chain runs to 216 residues: V-type ATP synthase subunit D (216 aa).

Belongs to the V-ATPase D subunit family.

In terms of biological role, produces ATP from ADP in the presence of a proton gradient across the membrane. The chain is V-type ATP synthase subunit D from Clostridium novyi (strain NT).